The sequence spans 335 residues: Biotin synthase (335 aa).

One can recognise a Radical SAM core domain in the interval 46-274 (YKVQLASLFS…KSKIRLSAGR (229 aa)). [4Fe-4S] cluster is bound by residues Cys61, Cys65, and Cys68. [2Fe-2S] cluster is bound by residues Cys105, Cys137, Cys197, and Arg269.

The protein belongs to the radical SAM superfamily. Biotin synthase family. In terms of assembly, homodimer. Requires [4Fe-4S] cluster as cofactor. [2Fe-2S] cluster serves as cofactor.

It catalyses the reaction (4R,5S)-dethiobiotin + (sulfur carrier)-SH + 2 reduced [2Fe-2S]-[ferredoxin] + 2 S-adenosyl-L-methionine = (sulfur carrier)-H + biotin + 2 5'-deoxyadenosine + 2 L-methionine + 2 oxidized [2Fe-2S]-[ferredoxin]. It participates in cofactor biosynthesis; biotin biosynthesis; biotin from 7,8-diaminononanoate: step 2/2. Catalyzes the conversion of dethiobiotin (DTB) to biotin by the insertion of a sulfur atom into dethiobiotin via a radical-based mechanism. The protein is Biotin synthase of Prochlorococcus marinus subsp. pastoris (strain CCMP1986 / NIES-2087 / MED4).